Consider the following 457-residue polypeptide: Transcription termination factor Rho (457 aa).

Positions 1–23 are disordered; it reads MNTTNKQLTEELNNTESNNDHND. The Rho RNA-BD domain maps to 77–152; sequence LIVGEGVLEV…LKVNRVNFED (76 aa). ATP is bound by residues 200 to 205, 212 to 217, and Arg-243; these read GKGQRA and RTGKTV.

This sequence belongs to the Rho family. Homohexamer. The homohexamer assembles into an open ring structure.

Functionally, facilitates transcription termination by a mechanism that involves Rho binding to the nascent RNA, activation of Rho's RNA-dependent ATPase activity, and release of the mRNA from the DNA template. The chain is Transcription termination factor Rho from Rickettsia prowazekii (strain Madrid E).